A 247-amino-acid polypeptide reads, in one-letter code: Cell division protein ZapD (247 aa).

This sequence belongs to the ZapD family. As to quaternary structure, interacts with FtsZ.

It localises to the cytoplasm. In terms of biological role, cell division factor that enhances FtsZ-ring assembly. Directly interacts with FtsZ and promotes bundling of FtsZ protofilaments, with a reduction in FtsZ GTPase activity. The chain is Cell division protein ZapD from Salmonella choleraesuis (strain SC-B67).